Reading from the N-terminus, the 1807-residue chain is Atrochrysone carboxylic acid synthase Agnpks1 (1807 aa).

Residues 41–173 (LFRELHNHSK…ITGAQVIRQA (133 aa)) form an N-terminal acylcarrier protein transacylase domain (SAT) region. The Ketosynthase family 3 (KS3) domain maps to 411–845 (QSKIAIVGMS…GGNTTILLEE (435 aa)). Active-site for beta-ketoacyl synthase activity residues include Cys-584, His-720, and His-763. The interval 946 to 1265 (FTFTGQGASY…SLAALHCAGV (320 aa)) is malonyl-CoA:ACP transacylase (MAT) domain. Residues 1334–1653 (TSTVHQIIQE…RILLSRFFSA (320 aa)) form a product template (PT) domain region. An N-terminal hotdog fold region spans residues 1338–1473 (HQIIQESIDG…ATLIYGDPSE (136 aa)). Residues 1338-1648 (HQIIQESIDG…FRRYPRILLS (311 aa)) form the PKS/mFAS DH domain. The active-site Proton acceptor; for dehydratase activity is His-1370. Residues 1500-1648 (VANRFNHQMA…FRRYPRILLS (149 aa)) form a C-terminal hotdog fold region. The Proton donor; for dehydratase activity role is filled by Asp-1559. In terms of domain architecture, Carrier spans 1732-1806 (DTTTAKAIQI…DLRSWLEEYY (75 aa)). Residue Ser-1766 is modified to O-(pantetheine 4'-phosphoryl)serine.

The enzyme catalyses holo-[ACP] + 8 malonyl-CoA + 8 H(+) = atrochrysone carboxyl-[ACP] + 8 CO2 + 8 CoA + 2 H2O. Its pathway is secondary metabolite biosynthesis. Non-reducing polyketide synthase; part of the gene cluster that mediates the biosynthesis of agnestins, dihydroxy-xanthone metabolites. The pathway begins with the assembly and cyclization of atrochrysone thioester by the non-reducing polyketide synthase Agnpks1. The atrochrysone carboxyl ACP thioesterase AgnL7 then breaks the thioester bond and releases the atrochrysone carboxylic acid as the first enzyme-free intermediate. The decarboxylase AgnL1 then catalyzes the concerted decarboxylation-elimination required to convert atochrysone carboxylic acid into emodin anthrone, which is further oxidized to emodin by the anthrone oxygenase AgnL2. Emodin then undergoes reduction catalyzed by the oxidoreductase AgnL4 to yield the dihydroquinone tautomer which is the substrate for reduction by the short chain dehydrogenase AgnL6 reduction to produce hydroxyketone, followed by AgnL8 dehydration and likely spontaneous autoxidation to chrysophanol. Baeyer-Villiger oxidation by the oxidase AgnL3 leads to monodictyphenone via cleavage of the C-10/C-10a bond of chrysophanol. Alternative cleavage at the C-4a/C-10 bond of chrysophanol also leads to the formation some cephalone F. Further conversion to agnestins A and B, requires reduction to dihydro-monodictyphenone, oxidation to agnestin C probably via an epoxide, and rearrangement to either agnestin A or agnestin B directly, although agnestin A or agnestin B can also interconvert. Within the cluster, AgnR1 is the only unassigned oxidoreductase present which could be involved in this conversion. However, AgnR1 seems not to be involved in this step, and thus genes involved in the proposed oxidation/reduction may be located elsewhere on the genome. Further agnestin A derivatives are probably formed by spontaneous decarboxylations, dehydrations and methanolysis reactions. The sequence is that of Atrochrysone carboxylic acid synthase Agnpks1 from Paecilomyces divaricatus (Penicillium divaricatum).